We begin with the raw amino-acid sequence, 74 residues long: Large ribosomal subunit protein uL29 (74 aa).

It belongs to the universal ribosomal protein uL29 family.

The sequence is that of Large ribosomal subunit protein uL29 from Streptomyces avermitilis (strain ATCC 31267 / DSM 46492 / JCM 5070 / NBRC 14893 / NCIMB 12804 / NRRL 8165 / MA-4680).